Here is a 443-residue protein sequence, read N- to C-terminus: UPF0597 protein DVU_0440 (443 aa).

It belongs to the UPF0597 family.

In Nitratidesulfovibrio vulgaris (strain ATCC 29579 / DSM 644 / CCUG 34227 / NCIMB 8303 / VKM B-1760 / Hildenborough) (Desulfovibrio vulgaris), this protein is UPF0597 protein DVU_0440.